The following is a 155-amino-acid chain: DNA gyrase inhibitor (155 aa).

The protein belongs to the DNA gyrase inhibitor family. In terms of assembly, interacts with DNA gyrase.

The protein resides in the cytoplasm. Inhibits the supercoiling activity of DNA gyrase. Acts by inhibiting DNA gyrase at an early step, prior to (or at the step of) binding of DNA by the gyrase. It protects cells against toxins that target DNA gyrase, by inhibiting activity of these toxins and reducing the formation of lethal double-strand breaks in the cell. The protein is DNA gyrase inhibitor of Salmonella typhi.